Reading from the N-terminus, the 117-residue chain is Immunoglobulin lambda variable 10-54 (117 aa).

Positions 1–21 (MPWALLLLTLLTHSAVSVVQA) are cleaved as a signal peptide. Residues 20 to 43 (QAGLTQPPSVSKGLRQTATLTCTG) are framework-1. Positions 22 to 117 (GLTQPPSVSK…CSALDSSLSA (96 aa)) constitute an Ig-like domain. Cysteine 41 and cysteine 108 are disulfide-bonded. Positions 44 to 52 (NSNIVGNQG) are complementarity-determining-1. The framework-2 stretch occupies residues 53 to 69 (AAWLQQHQGHPPKLLSY). The interval 70 to 72 (RNN) is complementarity-determining-2. A framework-3 region spans residues 73-108 (NRPSGISERFSASRSGNTASLTITGLQPEDEADYYC). The tract at residues 109-117 (SALDSSLSA) is complementarity-determining-3.

Immunoglobulins are composed of two identical heavy chains and two identical light chains; disulfide-linked.

It is found in the secreted. The protein localises to the cell membrane. Functionally, v region of the variable domain of immunoglobulin light chains that participates in the antigen recognition. Immunoglobulins, also known as antibodies, are membrane-bound or secreted glycoproteins produced by B lymphocytes. In the recognition phase of humoral immunity, the membrane-bound immunoglobulins serve as receptors which, upon binding of a specific antigen, trigger the clonal expansion and differentiation of B lymphocytes into immunoglobulins-secreting plasma cells. Secreted immunoglobulins mediate the effector phase of humoral immunity, which results in the elimination of bound antigens. The antigen binding site is formed by the variable domain of one heavy chain, together with that of its associated light chain. Thus, each immunoglobulin has two antigen binding sites with remarkable affinity for a particular antigen. The variable domains are assembled by a process called V-(D)-J rearrangement and can then be subjected to somatic hypermutations which, after exposure to antigen and selection, allow affinity maturation for a particular antigen. The chain is Immunoglobulin lambda variable 10-54 from Homo sapiens (Human).